A 176-amino-acid chain; its full sequence is Nucleoside triphosphate/diphosphate phosphatase (176 aa).

Catalysis depends on R23, which acts as the Proton donor. Positions 87, 103, 105, 107, 120, and 123 each coordinate Mg(2+).

It belongs to the Ntdp family. Mg(2+) serves as cofactor.

The enzyme catalyses a ribonucleoside 5'-triphosphate + H2O = a ribonucleoside 5'-diphosphate + phosphate + H(+). It catalyses the reaction a ribonucleoside 5'-diphosphate + H2O = a ribonucleoside 5'-phosphate + phosphate + H(+). In terms of biological role, has nucleoside phosphatase activity towards nucleoside triphosphates and nucleoside diphosphates. The polypeptide is Nucleoside triphosphate/diphosphate phosphatase (Bacillus velezensis (strain DSM 23117 / BGSC 10A6 / LMG 26770 / FZB42) (Bacillus amyloliquefaciens subsp. plantarum)).